The sequence spans 107 residues: U1-lycotoxin-Ls1k (107 aa).

An N-terminal signal peptide occupies residues 1 to 20 (MMKVLVVVALLVTLISYSSS). A propeptide spanning residues 21–41 (EGIDDLEADELLSLMANEQTR) is cleaved from the precursor. 4 disulfide bridges follow: cysteine 44/cysteine 59, cysteine 51/cysteine 68, cysteine 58/cysteine 86, and cysteine 70/cysteine 84.

It belongs to the neurotoxin 19 (CSTX) family. 04 (U1-Lctx) subfamily. As to expression, expressed by the venom gland.

The protein localises to the secreted. The protein is U1-lycotoxin-Ls1k of Lycosa singoriensis (Wolf spider).